The following is a 117-amino-acid chain: Large ribosomal subunit protein bL20 (117 aa).

Belongs to the bacterial ribosomal protein bL20 family.

In terms of biological role, binds directly to 23S ribosomal RNA and is necessary for the in vitro assembly process of the 50S ribosomal subunit. It is not involved in the protein synthesizing functions of that subunit. This Geotalea uraniireducens (strain Rf4) (Geobacter uraniireducens) protein is Large ribosomal subunit protein bL20.